The sequence spans 235 residues: NAD(P)H-quinone oxidoreductase subunit K (235 aa).

[4Fe-4S] cluster-binding residues include cysteine 52, cysteine 53, cysteine 117, and cysteine 148. Positions 216-226 (AGAAVAPQLPV) are enriched in low complexity. Residues 216 to 235 (AGAAVAPQLPVTEKEGRDRA) form a disordered region.

This sequence belongs to the complex I 20 kDa subunit family. NDH-1 can be composed of about 15 different subunits; different subcomplexes with different compositions have been identified which probably have different functions. It depends on [4Fe-4S] cluster as a cofactor.

It localises to the cellular thylakoid membrane. The enzyme catalyses a plastoquinone + NADH + (n+1) H(+)(in) = a plastoquinol + NAD(+) + n H(+)(out). It carries out the reaction a plastoquinone + NADPH + (n+1) H(+)(in) = a plastoquinol + NADP(+) + n H(+)(out). Its function is as follows. NDH-1 shuttles electrons from an unknown electron donor, via FMN and iron-sulfur (Fe-S) centers, to quinones in the respiratory and/or the photosynthetic chain. The immediate electron acceptor for the enzyme in this species is believed to be plastoquinone. Couples the redox reaction to proton translocation, and thus conserves the redox energy in a proton gradient. Cyanobacterial NDH-1 also plays a role in inorganic carbon-concentration. This chain is NAD(P)H-quinone oxidoreductase subunit K, found in Synechococcus elongatus (strain ATCC 33912 / PCC 7942 / FACHB-805) (Anacystis nidulans R2).